The sequence spans 302 residues: D-alanine--D-alanine ligase (302 aa).

The ATP-grasp domain occupies 100–295 (KTVFDHHGIL…FNELIAKLIE (196 aa)). 126–180 (QDLEPPVFIKPNSGGSSLGMTFARTAEELEKGIETVFSLGDSALVEEYTKGIEVT) lines the ATP pocket. 3 residues coordinate Mg(2+): Asp-250, Glu-262, and Asn-264.

Belongs to the D-alanine--D-alanine ligase family. Mg(2+) is required as a cofactor. It depends on Mn(2+) as a cofactor.

It localises to the cytoplasm. It carries out the reaction 2 D-alanine + ATP = D-alanyl-D-alanine + ADP + phosphate + H(+). It functions in the pathway cell wall biogenesis; peptidoglycan biosynthesis. Functionally, cell wall formation. This chain is D-alanine--D-alanine ligase, found in Maridesulfovibrio salexigens (strain ATCC 14822 / DSM 2638 / NCIMB 8403 / VKM B-1763) (Desulfovibrio salexigens).